The sequence spans 424 residues: MTAITDIIAREILDSRGNPTVEVDVYLEDGSMGRAAVPSGASTGAHEAVELRDGGKRYLGKGVEKAVEAVNTEIFDAIGGFDAENQIQIDQMMIALDGTPNKSRLGANAILGVSLAIAKAAAEASGLPLYRYVGGPNAHLLPVPMMNIINGGAHADNPIDFQEFMILPVGAENIREAVRMGSEVFHTLKKELSAQGHNTNVGDEGGFAPGLESAPAALDFIMKSIEKAGYRPGEDMYVGLDCASTEFFKDGKYVLEGEGRTLEPGAMAEYLAELVNKYPIISVEDGMAEDDWEGWKTLTDLVGNKCQLVGDDLFVTNSARLRDGIKMGVANSILVKVNQIGSLSETLDAVETAHKAGYTAVMSHRSGETEDSTIADLAVATNCGQIKTGSLARSDRLAKYNQLIRIEEMLGPQAAYAGRSILRG.

Residue Gln162 participates in (2R)-2-phosphoglycerate binding. Catalysis depends on Glu204, which acts as the Proton donor. The Mg(2+) site is built by Asp241, Glu284, and Asp311. 4 residues coordinate (2R)-2-phosphoglycerate: Lys336, Arg365, Ser366, and Lys387. Catalysis depends on Lys336, which acts as the Proton acceptor.

This sequence belongs to the enolase family. The cofactor is Mg(2+).

The protein localises to the cytoplasm. Its subcellular location is the secreted. It localises to the cell surface. The catalysed reaction is (2R)-2-phosphoglycerate = phosphoenolpyruvate + H2O. The protein operates within carbohydrate degradation; glycolysis; pyruvate from D-glyceraldehyde 3-phosphate: step 4/5. Its function is as follows. Catalyzes the reversible conversion of 2-phosphoglycerate (2-PG) into phosphoenolpyruvate (PEP). It is essential for the degradation of carbohydrates via glycolysis. This is Enolase from Agrobacterium fabrum (strain C58 / ATCC 33970) (Agrobacterium tumefaciens (strain C58)).